Here is a 496-residue protein sequence, read N- to C-terminus: Thiamine transporter 2 (496 aa).

Residues 1–7 (MDCYRTS) lie on the Cytoplasmic side of the membrane. Residues 8–28 (PSNSWIYTTVILCIFGFFSMM) form a helical membrane-spanning segment. Residues 29–53 (RPSEPFLIPYLSGPDKNLTSEEMTN) lie on the Extracellular side of the membrane. A glycan (N-linked (GlcNAc...) asparagine) is linked at asparagine 45. The chain crosses the membrane as a helical span at residues 54–74 (EIFPVWTYSYLVLLLPVLVLT). Topologically, residues 75 to 81 (DYVRYKP) are cytoplasmic. Residues 82–102 (VIILQGISFIITWLLLLFGQG) traverse the membrane as a helical segment. Residues 103–110 (VKTMQVVE) lie on the Extracellular side of the membrane. Residues 111–131 (FFYGMVTATEVAYYAYIYSVV) traverse the membrane as a helical segment. Topologically, residues 132–144 (SPEHYQRVSGYCR) are cytoplasmic. The chain crosses the membrane as a helical span at residues 145-165 (SVTLVAYTAGSVLAQLLVSLA). N-linked (GlcNAc...) asparagine glycosylation occurs at asparagine 166. Residues 166-169 (NLSY) are Extracellular-facing. Residues 170–190 (FYLNVISLASVSVAFLFSLFL) form a helical membrane-spanning segment. Topologically, residues 191–282 (PMPKKSMFFH…YSSKRLFYWS (92 aa)) are cytoplasmic. The disordered stretch occupies residues 210–248 (SSSVNPVLEETHEGEAPDCEKQKPTSEIPSTSGKLHKGQ). The segment covering 218–233 (EETHEGEAPDCEKQKP) has biased composition (basic and acidic residues). Positions 234–248 (TSEIPSTSGKLHKGQ) are enriched in polar residues. The chain crosses the membrane as a helical span at residues 283–303 (LWWAFATAGFNQILNYVQILW). The Extracellular portion of the chain corresponds to 304–316 (DYKSPSQDSSIYN). A helical transmembrane segment spans residues 317–337 (GAVEATATFGGAVAAFAVGYV). The Cytoplasmic portion of the chain corresponds to 338-342 (KVNWD). Residues 343 to 363 (LLGELALAVFSVVNAGSLFLM) traverse the membrane as a helical segment. Residues 364–375 (HYTANIWACYAG) lie on the Extracellular side of the membrane. The helical transmembrane segment at 376–396 (YLIFKSSYMLLITIAVFQIAV) threads the bilayer. Residues 397 to 405 (NLSVERYAL) lie on the Cytoplasmic side of the membrane. Residues 406–426 (VFGINTFIALVIQTIITVIVV) form a helical membrane-spanning segment. The Extracellular segment spans residues 427–434 (DQRGLNLP). The chain crosses the membrane as a helical span at residues 435–455 (ISIQFLVYGSYFAVIAGIFLM). Over 456–496 (RSMYIIYSTKSQKDVQSPAPSENPDMSHPEEESNAIMSTKL) the chain is Cytoplasmic. Residues 469–496 (DVQSPAPSENPDMSHPEEESNAIMSTKL) are disordered.

This sequence belongs to the reduced folate carrier (RFC) transporter (TC 2.A.48) family.

It localises to the membrane. It carries out the reaction thiamine(out) + H(+)(in) = thiamine(in) + H(+)(out). The catalysed reaction is pyridoxine(out) + n H(+)(out) = pyridoxine(in) + n H(+)(in). Functionally, mediates high affinity thiamine uptake, probably via a proton anti-port mechanism. Has no folate transport activity. Mediates H(+)-dependent pyridoxine transport. This is Thiamine transporter 2 (SLC19A3) from Macaca fascicularis (Crab-eating macaque).